A 220-amino-acid polypeptide reads, in one-letter code: tRNA (guanine-N(7)-)-methyltransferase (220 aa).

S-adenosyl-L-methionine contacts are provided by E44, E69, D96, and D118. D118 is an active-site residue. K122 lines the substrate pocket. An interaction with RNA region spans residues 124 to 129; that stretch reads RHEKRR. Substrate-binding positions include D154 and 191 to 194; that span reads TEYE.

This sequence belongs to the class I-like SAM-binding methyltransferase superfamily. TrmB family.

The catalysed reaction is guanosine(46) in tRNA + S-adenosyl-L-methionine = N(7)-methylguanosine(46) in tRNA + S-adenosyl-L-homocysteine. It participates in tRNA modification; N(7)-methylguanine-tRNA biosynthesis. Catalyzes the formation of N(7)-methylguanine at position 46 (m7G46) in tRNA. In Halalkalibacterium halodurans (strain ATCC BAA-125 / DSM 18197 / FERM 7344 / JCM 9153 / C-125) (Bacillus halodurans), this protein is tRNA (guanine-N(7)-)-methyltransferase.